We begin with the raw amino-acid sequence, 74 residues long: Protein A30 homolog (74 aa).

The protein belongs to the chordopoxvirinae A30 family. As to quaternary structure, interacts with protein G7; the interaction stabilizes both proteins. In terms of processing, phosphorylated by viral F10 kinase.

Required for the association between the dense viroplasm and the viral membranes to form the mature virion (MV). This chain is Protein A30 homolog, found in Fowlpox virus (strain NVSL) (FPV).